Here is a 567-residue protein sequence, read N- to C-terminus: Arginine--tRNA ligase (567 aa).

The short motif at 121-131 (ANPNGPLHVGH) is the 'HIGH' region element.

This sequence belongs to the class-I aminoacyl-tRNA synthetase family.

It is found in the cytoplasm. It carries out the reaction tRNA(Arg) + L-arginine + ATP = L-arginyl-tRNA(Arg) + AMP + diphosphate. In Methanococcoides burtonii (strain DSM 6242 / NBRC 107633 / OCM 468 / ACE-M), this protein is Arginine--tRNA ligase.